We begin with the raw amino-acid sequence, 164 residues long: Siroheme decarboxylase alpha subunit (164 aa).

Belongs to the Ahb/Nir family. As to quaternary structure, forms a heterodimer composed of AhbA and AhbB.

It catalyses the reaction siroheme + 2 H(+) = 12,18-didecarboxysiroheme + 2 CO2. The protein operates within porphyrin-containing compound metabolism; protoheme biosynthesis. Involved in siroheme-dependent heme b biosynthesis. Catalyzes the decarboxylation of siroheme into didecarboxysiroheme. This Oleidesulfovibrio alaskensis (strain ATCC BAA-1058 / DSM 17464 / G20) (Desulfovibrio alaskensis) protein is Siroheme decarboxylase alpha subunit.